The chain runs to 69 residues: MFGLGGQELVLILLIILLLFGAKKLPELAKGLGKGMKEFKKAQSEIEEELNKAVDDTPEKEKKSSSEKS.

The chain crosses the membrane as a helical span at residues 1-21; that stretch reads MFGLGGQELVLILLIILLLFG. Residues 48–69 form a disordered region; sequence EELNKAVDDTPEKEKKSSSEKS.

It belongs to the TatA/E family. In terms of assembly, forms a complex with TatC.

The protein localises to the cell inner membrane. Functionally, part of the twin-arginine translocation (Tat) system that transports large folded proteins containing a characteristic twin-arginine motif in their signal peptide across membranes. TatA could form the protein-conducting channel of the Tat system. The polypeptide is Sec-independent protein translocase protein TatA (Chlorobium phaeobacteroides (strain BS1)).